Reading from the N-terminus, the 502-residue chain is 1-aminocyclopropane-1-carboxylate synthase-like protein 1 (502 aa).

The interval 15 to 35 (CPGSDSIQDLPSNKGDGLERE) is disordered. A substrate-binding site is contributed by glutamate 106. Residue lysine 324 is modified to N6-(pyridoxal phosphate)lysine.

Belongs to the class-I pyridoxal-phosphate-dependent aminotransferase family.

Its function is as follows. Does not catalyze the synthesis of 1-aminocyclopropane-1-carboxylate but is capable of catalyzing the deamination of L-vinylglycine. In Bos taurus (Bovine), this protein is 1-aminocyclopropane-1-carboxylate synthase-like protein 1 (ACCS).